A 544-amino-acid polypeptide reads, in one-letter code: MTTEIEKELETSEAVLEKRRNFAIISHPDAGKTTLTEKLLLYGGAIHQAGAVKARRDQRKATSDWMEMEKQRGISITSTVLQFDYRDFQINLLDTPGHQDFSEDTYRTLAAADNAVMLIDAAKGLEPQTRKLFEVCKLRQLPIFTFVNKMDRPGREPLDLLDEIERELGLQTYPVNWPIGIGDRFRGVFDRATQTIHLFERRSHGSQEAQETVIELGDPKIEDYLEKDLYYQLKEDIELLSELGAELDLPAVHAGEMTPIFFGSAMTNFGVKLFLESFLDYGLAPRGRNSSLGVLDPTYPDFTGFVFKLQANMDPKHRDRVAFVRVCTGKFEKDMVVNHARTGKTIRLSRPQKLFAQDRAVIEEAYPGDVIGLNNPGVFAIGDTIYMGKKLEYEGIPCFSPELFAYLRNPNPSKFKQFQKGVSELQEEGAVQILSSIDEFKRDPILAAVGQLQFEVVQFRLLSEYGVETTLEPLAYSLARWVAGGWAALEKAGKLFNTLTVKDYWGRPVLLFKNEWNLQQVKEDHPSLQLNSIAPVGSGVQPQS.

Residues Glu17–Arg286 form the tr-type G domain. GTP is bound by residues Ser26–Thr33, Asp94–His98, and Asn148–Asp151.

This sequence belongs to the TRAFAC class translation factor GTPase superfamily. Classic translation factor GTPase family. PrfC subfamily.

The protein resides in the cytoplasm. Increases the formation of ribosomal termination complexes and stimulates activities of RF-1 and RF-2. It binds guanine nucleotides and has strong preference for UGA stop codons. It may interact directly with the ribosome. The stimulation of RF-1 and RF-2 is significantly reduced by GTP and GDP, but not by GMP. The polypeptide is Peptide chain release factor 3 (Microcystis aeruginosa (strain NIES-843 / IAM M-2473)).